A 325-amino-acid polypeptide reads, in one-letter code: UDP-N-acetylglucosamine transporter ROCK1 (325 aa).

Over 1–13 the chain is Cytoplasmic; sequence MATANGAKSPSSM. The chain crosses the membrane as a helical span at residues 14-34; that stretch reads GPKVLFYSILLTLQYGAQPLI. Over 35-42 the chain is Lumenal; it reads SKRCIRKD. A helical membrane pass occupies residues 43-63; it reads VIVTSSVLTCEIVKVICALIL. The Cytoplasmic segment spans residues 64-109; sequence MARNGSLKGLAKEWTLMGSLTASGLPAAIYALQNSLLQISYRSLDS. Residues 110–130 form a helical membrane-spanning segment; sequence LTFSILNQTKIFFTAFFTFII. Residues 131–135 are Lumenal-facing; it reads LRQKQ. A helical membrane pass occupies residues 136–156; sequence SILQIGALCLLIMAAVLLSVG. At 157 to 171 the chain is on the cytoplasmic side; sequence EGSNKDSSGINADQK. Residues 172–192 form a helical membrane-spanning segment; the sequence is LFYGIIPVLAASVLSGLASSL. Topologically, residues 193–203 are lumenal; that stretch reads CQWASQVKKHS. Residues 204–224 traverse the membrane as a helical segment; that stretch reads SYLMTVEMSIVGSLCLLVSTL. Over 225–241 the chain is Cytoplasmic; sequence KSPDGEAIKKYGFFHGW. Residues 242-262 form a helical membrane-spanning segment; the sequence is TALTLVPVISNALGGILVGLV. The Lumenal portion of the chain corresponds to 263 to 270; that stretch reads TSHAGGVR. The helical transmembrane segment at 271-291 threads the bilayer; that stretch reads KGFVIVSALLVTALLQFAFEG. At 292-325 the chain is on the cytoplasmic side; the sequence is KPPSSYCLVALPLVMSSISMYQKYPYIDKKKKKV.

The protein belongs to the nucleotide-sugar transporter family. CMP-Sialate:CMP antiporter (TC 2.A.7.12) subfamily. In terms of tissue distribution, expressed in roots, cotyledons, leaves, stems, flowers and siliques.

Its subcellular location is the endoplasmic reticulum membrane. Functionally, mediates the transport of UDP-linked acetylated hexosamines across the endoplasmic reticulum (ER) membrane. Facilitates UDP-N-acetylglucosamine (UDP-GlcNAc) and UDP-N-acetylgalactosamine (UDP-GalNAc) transport. Regulates the cytokinin signal in meristematic cells through modulating activity of cytokinin oxidases/dehydrogenases. Part of the ER quality control system, which determines the fate of aberrant proteins in the secretory pathway. The polypeptide is UDP-N-acetylglucosamine transporter ROCK1 (Arabidopsis thaliana (Mouse-ear cress)).